Consider the following 96-residue polypeptide: Large ribosomal subunit protein uL23 (96 aa).

This sequence belongs to the universal ribosomal protein uL23 family. As to quaternary structure, part of the 50S ribosomal subunit. Contacts protein L29, and trigger factor when it is bound to the ribosome.

In terms of biological role, one of the early assembly proteins it binds 23S rRNA. One of the proteins that surrounds the polypeptide exit tunnel on the outside of the ribosome. Forms the main docking site for trigger factor binding to the ribosome. In Thermus thermophilus (strain ATCC BAA-163 / DSM 7039 / HB27), this protein is Large ribosomal subunit protein uL23.